We begin with the raw amino-acid sequence, 150 residues long: Arginine repressor (150 aa).

Belongs to the ArgR family.

It is found in the cytoplasm. The protein operates within amino-acid biosynthesis; L-arginine biosynthesis [regulation]. Regulates arginine biosynthesis genes. The chain is Arginine repressor from Clostridium botulinum (strain Eklund 17B / Type B).